The following is a 372-amino-acid chain: Lysophosphatidic acid receptor 5 (372 aa).

Residues 1–26 are Extracellular-facing; it reads MLANSSSTNSSVLPCPDYRPTHRLHL. N-linked (GlcNAc...) asparagine glycosylation is found at N4 and N9. A helical transmembrane segment spans residues 27-47; that stretch reads VVYSLVLAAGLPLNALALWVF. Over 48–55 the chain is Cytoplasmic; sequence LRALRVHS. The chain crosses the membrane as a helical span at residues 56–76; the sequence is VVSVYMCNLAASDLLFTLSLP. Residues 77–96 are Extracellular-facing; sequence VRLSYYALHHWPFPDLLCQT. A disulfide bridge links C94 with C175. The chain crosses the membrane as a helical span at residues 97 to 117; it reads TGAIFQMNMYGSCIFLMLINV. The Cytoplasmic portion of the chain corresponds to 118–136; that stretch reads DRYAAIVHPLRLRHLRRPR. Residues 137 to 157 form a helical membrane-spanning segment; it reads VARLLCLGVWALILVFAVPAA. Residues 158–187 are Extracellular-facing; that stretch reads RVHRPSRCRYRDLEVRLCFESFSDELWKGR. Residues 188-208 traverse the membrane as a helical segment; the sequence is LLPLVLLAEALGFLLPLAAVV. The Cytoplasmic segment spans residues 209 to 239; that stretch reads YSSGRVFWTLARPDATQSQRRRKTVRLLLAN. Residues 240–260 form a helical membrane-spanning segment; that stretch reads LVIFLLCFVPYNSTLAVYGLL. Topologically, residues 261-276 are extracellular; the sequence is RSKLVAASVPARDRVR. Residues 277–297 traverse the membrane as a helical segment; that stretch reads GVLMVMVLLAGANCVLDPLVY. The Cytoplasmic portion of the chain corresponds to 298–372; it reads YFSAEGFRNT…FTQCPQDSAL (75 aa). The disordered stretch occupies residues 312-372; the sequence is GTPHRARTSA…FTQCPQDSAL (61 aa). Polar residues-rich tracts occupy residues 332-341 and 357-372; these read SERSAVTTDA and SHSLSSFTQCPQDSAL.

The protein belongs to the G-protein coupled receptor 1 family. In terms of tissue distribution, not expressed in frontal cortex, basal forebrain, caudate putamen, thalamus, or hippocampus.

It is found in the cell membrane. In terms of biological role, receptor for lysophosphatidic acid (LPA), a mediator of diverse cellular activities. In Homo sapiens (Human), this protein is Lysophosphatidic acid receptor 5 (LPAR5).